A 226-amino-acid polypeptide reads, in one-letter code: MNPIVINRLQRKLGYTFQHHELLQQALTHRSASSKHNERLEFLGDSILSYVIANALYHRFPRVDEGDMSRMRATLVRGNTLAEIAREFELGECLRLGPGELKSGGFRRESILADTVEALIGGVFLDSDIQTVEQLILNWYQTRLDEISPGDKQKDPKTRLQEYLQGRHLPLPSYLVVQVRGEAHDQEFTIHCQVSGLSEPVVGTGSSRRKAEQAAAEQALKMLELE.

In terms of domain architecture, RNase III spans 6–128 (INRLQRKLGY…LIGGVFLDSD (123 aa)). Glu-41 is a Mg(2+) binding site. Asp-45 is a catalytic residue. Mg(2+)-binding residues include Asp-114 and Glu-117. Glu-117 is an active-site residue. The region spanning 155–225 (DPKTRLQEYL…AEQALKMLEL (71 aa)) is the DRBM domain.

It belongs to the ribonuclease III family. Homodimer. Mg(2+) serves as cofactor.

It is found in the cytoplasm. It carries out the reaction Endonucleolytic cleavage to 5'-phosphomonoester.. Digests double-stranded RNA. Involved in the processing of primary rRNA transcript to yield the immediate precursors to the large and small rRNAs (23S and 16S). Processes some mRNAs, and tRNAs when they are encoded in the rRNA operon. Processes pre-crRNA and tracrRNA of type II CRISPR loci if present in the organism. This Enterobacter sp. (strain 638) protein is Ribonuclease 3.